The chain runs to 92 residues: Small ribosomal subunit protein uS19c (92 aa).

Belongs to the universal ribosomal protein uS19 family.

It localises to the plastid. The protein resides in the chloroplast. Functionally, protein S19 forms a complex with S13 that binds strongly to the 16S ribosomal RNA. The polypeptide is Small ribosomal subunit protein uS19c (rps19) (Marchantia polymorpha (Common liverwort)).